Consider the following 417-residue polypeptide: Metal-binding activator 1 (417 aa).

A DNA-binding region (copper-fist) is located at residues 1-40 (MIIFNGNKYACASCIRGHRSSTCRHSHRMLIKVRTRGRPS). Residues Cys11, Cys14, Cys23, and His25 each coordinate Zn(2+). 2 disordered regions span residues 128 to 198 (FLRK…IFTP) and 216 to 242 (YNSSVPGAHDSSETLTPQSTTTIAAPH). Ser143 is modified (phosphoserine). A compositionally biased stretch (basic and acidic residues) spans 153–178 (SEKKERSRLQQEPIRHFSNCCKKDKS). 2 stretches are compositionally biased toward polar residues: residues 179-190 (QNPASNGKTNKA) and 228-238 (ETLTPQSTTTI). 2 repeat units span residues 264-279 (CSCEDESCPCVNCLIH) and 322-337 (CICPPDNCTCDGCFSH). A 2 X 16 AA repeat of C-X-C-X(4)-C-X-C-X-X-C-X-X-H region spans residues 264 to 337 (CSCEDESCPC…NCTCDGCFSH (74 aa)).

It is found in the nucleus. Its function is as follows. Regulatory protein involved in Cu/Fe utilization and stress resistance. Involved in basal level transcription of FRE1 and H(2)O(2)-induced transcription of CTT1. Regulates the transcription of CTR1 and CTR3 via the copper ion responsive elements in their promoters. Required for degradation of CTR1. The polypeptide is Metal-binding activator 1 (MAC1) (Saccharomyces cerevisiae (strain ATCC 204508 / S288c) (Baker's yeast)).